Here is a 72-residue protein sequence, read N- to C-terminus: Protein SlyX (72 aa).

This sequence belongs to the SlyX family.

The sequence is that of Protein SlyX from Cronobacter sakazakii (strain ATCC BAA-894) (Enterobacter sakazakii).